Here is a 78-residue protein sequence, read N- to C-terminus: Probable Fe(2+)-trafficking protein (78 aa).

The protein belongs to the Fe(2+)-trafficking protein family. As to quaternary structure, monomer.

Could be a mediator in iron transactions between iron acquisition and iron-requiring processes, such as synthesis and/or repair of Fe-S clusters in biosynthetic enzymes. The sequence is that of Probable Fe(2+)-trafficking protein from Wigglesworthia glossinidia brevipalpis.